We begin with the raw amino-acid sequence, 558 residues long: EF-hand and coiled-coil domain-containing protein 1 (558 aa).

Residues 43 to 78 (GLDQYLQEVFHHLDCRGAGRLPRADFRALCAVLGLN) form the EF-hand domain. Residues 161-170 (LRRPRRRRRP) are compositionally biased toward basic residues. Disordered stretches follow at residues 161-183 (LRRPRRRRRPGSPSLHGGAYGER) and 304-395 (RSEG…QPSG). 2 coiled-coil regions span residues 179–304 (AYGE…RGYR) and 453–495 (VEAE…LNIS).

In Mus musculus (Mouse), this protein is EF-hand and coiled-coil domain-containing protein 1 (Efcc1).